Reading from the N-terminus, the 840-residue chain is DNA gyrase subunit A (840 aa).

A Topo IIA-type catalytic domain is found at 51–516; it reads LPDVRDGFKP…VSSHIDDEDL (466 aa). Tyr-139 serves as the catalytic O-(5'-phospho-DNA)-tyrosine intermediate. A GyrA-box motif is present at residues 543 to 549; sequence QRRGGVG.

The protein belongs to the type II topoisomerase GyrA/ParC subunit family. Heterotetramer, composed of two GyrA and two GyrB chains. In the heterotetramer, GyrA contains the active site tyrosine that forms a transient covalent intermediate with DNA, while GyrB binds cofactors and catalyzes ATP hydrolysis.

Its subcellular location is the cytoplasm. It carries out the reaction ATP-dependent breakage, passage and rejoining of double-stranded DNA.. In terms of biological role, a type II topoisomerase that negatively supercoils closed circular double-stranded (ds) DNA in an ATP-dependent manner to modulate DNA topology and maintain chromosomes in an underwound state. Negative supercoiling favors strand separation, and DNA replication, transcription, recombination and repair, all of which involve strand separation. Also able to catalyze the interconversion of other topological isomers of dsDNA rings, including catenanes and knotted rings. Type II topoisomerases break and join 2 DNA strands simultaneously in an ATP-dependent manner. This Ureaplasma parvum serovar 3 (strain ATCC 700970) protein is DNA gyrase subunit A.